Consider the following 978-residue polypeptide: Exocyst complex component 5 (978 aa).

Over residues 1–11 (MSWARNIQSRI) the composition is skewed to polar residues. 2 disordered regions span residues 1–87 (MSWA…TTTQ) and 122–246 (TSPS…TTPY). 2 stretches are compositionally biased toward low complexity: residues 36–52 (PSSPTLSALSSPITSLT) and 62–86 (SQPTTNTTSLTSTSPPSPTISTTTT). Polar residues predominate over residues 122-142 (TSPSMASPIGTSTGIQNPNAK). A compositionally biased stretch (low complexity) spans 143–245 (PSSLPSPSQS…QPTPIKQTTP (103 aa)). Residues 303–325 (NTQLQLSQLESNIDRRLDDLAEE) are a coiled coil.

This sequence belongs to the SEC10 family. The exocyst complex is composed of sec3/exoc1, sec5/exoc2, sec6/exoc3, sec8/exoc4, sec10/exoc5, sec15/exoc6, exo70/exoc7 and exo84/exoc8.

In terms of biological role, component of the exocyst complex involved in the docking of exocytic vesicles with fusion sites on the plasma membrane. This chain is Exocyst complex component 5 (exoc5), found in Dictyostelium discoideum (Social amoeba).